The sequence spans 246 residues: Sulfate transporter CysZ (246 aa).

Transmembrane regions (helical) follow at residues 24-44, 69-89, 148-168, and 214-234; these read LFVL…IGFA, IVWP…FTMV, LLVL…WILF, and LLIP…ATLF.

This sequence belongs to the CysZ family.

It localises to the cell inner membrane. Functionally, high affinity, high specificity proton-dependent sulfate transporter, which mediates sulfate uptake. Provides the sulfur source for the cysteine synthesis pathway. The chain is Sulfate transporter CysZ from Pseudomonas aeruginosa (strain LESB58).